A 456-amino-acid chain; its full sequence is MSLSKLSQKCFSRHHARTFIRFSSSDFQSLLGPPRVPNPYADSGRNKFAAPIVPINVNNHGNVFASIKVPINETPEAVAFKPEVEEAPRVEKVEVEATKIETEKVASSPAPATPPSAIDELNSLKDSLSKLEEAAASKTSAPSGSSGDNNDQPGNAEEVEARRKRMERNTRIGGYVLLGGSVIGFISFCFYYGRAQRDEAGNVIADEFSGSFLAPFYRIANSFKLWKDYVVEPAREQLLPDPLPAPYLQPKYTIVIELKNILVHPEWTYKTGYRFLKRPALDYFLDVIGYPNFEVVIYSSESMMTAAPVVDSFDQKQRIMYKLFRDCTKYMNGHHVKDLSKLNRDLSKVIYIDFDAKSGQLNPENMLRVPEWRGNMDDTSLVDLAELLKTIHLSDAEDVRPMLQYYSQYDDPAKEFRRRAVYLAQQEEQKKQQPDDSSMLKRYSGRLFGFRRHASA.

The transit peptide at 1–22 (MSLSKLSQKCFSRHHARTFIRF) directs the protein to the mitochondrion. The Mitochondrial matrix segment spans residues 23–171 (SSSDFQSLLG…RRKRMERNTR (149 aa)). 2 disordered regions span residues 101–120 (ETEKVASSPAPATPPSAIDE) and 132–165 (EEAAASKTSAPSGSSGDNNDQPGNAEEVEARRKR). Residues 137–153 (SKTSAPSGSSGDNNDQP) show a composition bias toward polar residues. The helical transmembrane segment at 172-192 (IGGYVLLGGSVIGFISFCFYY) threads the bilayer. At 193–456 (GRAQRDEAGN…LFGFRRHASA (264 aa)) the chain is on the mitochondrial intermembrane side. Residues 247-391 (YLQPKYTIVI…VDLAELLKTI (145 aa)) enclose the FCP1 homology domain.

It belongs to the TIM50 family. In terms of assembly, component of the TIM23 complex at least composed of tim-23, tim-17 and tim-50.

The protein resides in the mitochondrion inner membrane. In terms of biological role, essential component of the TIM23 complex, a complex that mediates the translocation of transit peptide-containing proteins across the mitochondrial inner membrane. This Caenorhabditis briggsae protein is Mitochondrial import inner membrane translocase subunit TIM50 (scpl-4).